The primary structure comprises 432 residues: MASNVEDTLIKLDRLHSVDYKNDEVQLIKSKIEGIVHQISNRIGELNPILSNSVVHCGSFYHNSKINAPDEFDFLLVLNKFSQPGVCSCKPFEDPEYTHLVSLGIDNTKLNWNPQSVLEWEEDAANKQTLLQATIDSEYRNAVCSCLATMSLPDGISLTTSQKSVRRRFEGGEEFLANFKFSGPALTLLLNWKGVYYPNLNISVDVTYVIAMRGLPSFCNLDKRLPSEHLIVKAGLCADASHELLYCRMLDDTWKQTCSVLENKIICFWFKENDASNVCYRLLKIIRNLVTPVNQLGEAFLKTYALKTLFLYECEQFPDSKFWRTDELSTHLLTIFQKLLSAIQNRFLPNYFNENQNALCYPLDSRPEDENEEGENKFISSVYEAMCKIIEDIISSLEKGLASEQTLKFYFEPGQKIVIKDPDIQDALEKEN.

ATP-binding positions include Ser-59 and 71-73; that span reads EFD. Mg(2+)-binding residues include Glu-71, Asp-73, and Asp-205. GTP contacts are provided by residues Asp-205 and 255–262; that span reads KQTCSVLE. ATP is bound by residues 259–262, Lys-284, and 303–307; these read SVLE and TYALK.

The protein belongs to the mab-21 family. Requires Mg(2+) as cofactor. Mn(2+) serves as cofactor.

The catalysed reaction is GTP + ATP = 2',3'-cGAMP + 2 diphosphate. It carries out the reaction GTP + ATP = pppGp(2'-5')A + diphosphate. It catalyses the reaction pppGp(2'-5')A = 2',3'-cGAMP + diphosphate. Functionally, nucleotidyltransferase that catalyzes the formation of cyclic GMP-AMP (2',3'-cGAMP) from ATP and GTP and plays a key role in innate immunity. Directly binds some unknown ligand, activating the nucleotidyltransferase activity, leading to synthesis of 2',3'-cGAMP, a second messenger that binds to and activates Sting, thereby triggering the immune response via activation of the NF-kappa-B transcription factor. The chain is Cyclic GMP-AMP synthase-like receptor from Pocillopora damicornis (Cauliflower coral).